A 1063-amino-acid chain; its full sequence is Exportin-1 (1063 aa).

The region spanning 43-109 (AQSILTTLKE…KKYVVSLIIK (67 aa)) is the Importin N-terminal domain. Positions 1034–1063 (AEEQSNKHQMQRNIPGMLNPHELPEDMQDE) are disordered.

Belongs to the exportin family. As to quaternary structure, interacts with Clbn (via its N-terminus). Associates with the nuclear pore complex via interaction with mbo and Nup214. Interacts with target proteins containing NES sequences such as actin and dl. High expression observed in the developing embryonic brain, hind gut and posterior spiracles shortly before dorsal closure; and in the ventral nerve cord, midgut and somatic musculature shortly after dorsal closure. Expression increases when the tissue is well developed.

It localises to the nucleus. It is found in the nucleus membrane. In terms of biological role, receptor for the leucine-rich nuclear export signal (NES). Binds cooperatively to the NES on its target protein and to the small GTPase Ran in its active GTP-bound form. Involved in the export of dl, RpS2 and the pre-40S ribosome from the nucleus to the cytoplasm. Plays an important role in nuclear pore assembly by mediating nucleoporin condensation and biogenesis of annulate lamellae. Required for the function or maintenance of certain tissues such as brain and gut. In Drosophila melanogaster (Fruit fly), this protein is Exportin-1.